The chain runs to 145 residues: Fluoride-specific ion channel FluC 2 (145 aa).

A run of 4 helical transmembrane segments spans residues Met-16–Ala-36, Val-42–Leu-62, Leu-80–Thr-100, and Ile-113–Leu-133. Residues Gly-88 and Thr-91 each contribute to the Na(+) site.

This sequence belongs to the fluoride channel Fluc/FEX (TC 1.A.43) family.

The protein resides in the cell membrane. The enzyme catalyses fluoride(in) = fluoride(out). Its activity is regulated as follows. Na(+) is not transported, but it plays an essential structural role and its presence is essential for fluoride channel function. Functionally, fluoride-specific ion channel. Important for reducing fluoride concentration in the cell, thus reducing its toxicity. This Leifsonia xyli subsp. xyli (strain CTCB07) protein is Fluoride-specific ion channel FluC 2.